The chain runs to 67 residues: uncharacterized protein (67 aa).

To E.coli YbdD.

This is an uncharacterized protein from Escherichia coli O157:H7.